Consider the following 184-residue polypeptide: Photosystem I assembly protein Ycf4 (184 aa).

The next 2 helical transmembrane spans lie at 19–39 (ISNF…LLVG) and 57–77 (IIFF…LFIS).

This sequence belongs to the Ycf4 family.

Its subcellular location is the plastid. It is found in the chloroplast thylakoid membrane. Its function is as follows. Seems to be required for the assembly of the photosystem I complex. This is Photosystem I assembly protein Ycf4 from Solanum bulbocastanum (Wild potato).